A 244-amino-acid chain; its full sequence is Protein-L-isoaspartate O-methyltransferase 2 (244 aa).

The active site involves serine 88.

Belongs to the methyltransferase superfamily. L-isoaspartyl/D-aspartyl protein methyltransferase family.

The protein resides in the cytoplasm. It carries out the reaction [protein]-L-isoaspartate + S-adenosyl-L-methionine = [protein]-L-isoaspartate alpha-methyl ester + S-adenosyl-L-homocysteine. Catalyzes the methyl esterification of L-isoaspartyl residues in peptides and proteins that result from spontaneous decomposition of normal L-aspartyl and L-asparaginyl residues. It plays a role in the repair and/or degradation of damaged proteins. This is Protein-L-isoaspartate O-methyltransferase 2 from Shewanella sediminis (strain HAW-EB3).